We begin with the raw amino-acid sequence, 270 residues long: Methionine-rich protein (270 aa).

Positions 1–18 (MLSLWAIGLLGLLNQVEA) are cleaved as a signal peptide. The segment covering 31-52 (QRSAQFSSSGWGTSPAAQNPWS) has biased composition (polar residues). Positions 31–95 (QRSAQFSSSG…MPGSMPGAMP (65 aa)) are disordered. The span at 56–95 (PMPNTNMPNMNTGSLPGSMPGAMPGSMPGAMPGSMPGAMP) shows a compositional bias: low complexity.

In terms of tissue distribution, component of the acid-soluble organic matrix of calcified layers of the shell (at protein level).

Its subcellular location is the secreted. This is Methionine-rich protein from Lottia gigantea (Giant owl limpet).